Reading from the N-terminus, the 331-residue chain is DNA-directed RNA polymerase subunit alpha (331 aa).

Residues 1-235 (MTMHIRWRGM…KHLNPFVQYR (235 aa)) form an alpha N-terminal domain (alpha-NTD) region. Residues 255–331 (QLEAKLNMTL…GMRVPNQPLF (77 aa)) form an alpha C-terminal domain (alpha-CTD) region.

Belongs to the RNA polymerase alpha chain family. In terms of assembly, homodimer. The RNAP catalytic core consists of 2 alpha, 1 beta, 1 beta' and 1 omega subunit. When a sigma factor is associated with the core the holoenzyme is formed, which can initiate transcription.

The catalysed reaction is RNA(n) + a ribonucleoside 5'-triphosphate = RNA(n+1) + diphosphate. In terms of biological role, DNA-dependent RNA polymerase catalyzes the transcription of DNA into RNA using the four ribonucleoside triphosphates as substrates. The polypeptide is DNA-directed RNA polymerase subunit alpha (Rhodopirellula baltica (strain DSM 10527 / NCIMB 13988 / SH1)).